The sequence spans 427 residues: Serine protease inhibitor 88Ea (427 aa).

The signal sequence occupies residues 1–18 (MHILSISLMAVLPAIALA). Asn-224 carries N-linked (GlcNAc...) asparagine glycosylation.

Belongs to the serpin family. In terms of tissue distribution, expressed in nurse cells and oocytes. Expressed in wings.

The protein localises to the secreted. In terms of biological role, serine protease inhibitor with activity toward trypsin. Negatively regulates the Toll signaling pathway and suppresses the expression of the antifungal peptide drosomycin. Its negative regulation of the Toll signaling pathway also results in the inhibition of the melanization immune response via the phenoloxidase (PPO1) cascade. Essential for unfolding and expansion of the wings after emergence from the pupal case. May regulate the Toll pathway by blocking the proteolysis of the Toll ligand spz. This is Serine protease inhibitor 88Ea from Drosophila melanogaster (Fruit fly).